A 350-amino-acid chain; its full sequence is 2-oxoglutarate-dependent ethylene/succinate-forming enzyme (350 aa).

The region spanning 166-286 (GWHHMRVLRF…RFACAYFHEP (121 aa)) is the Fe2OG dioxygenase domain. Positions 189 and 268 each coordinate Fe cation.

This sequence belongs to the iron/ascorbate-dependent oxidoreductase family. As to quaternary structure, monomer. Fe(2+) serves as cofactor.

It catalyses the reaction 2-oxoglutarate + O2 + 2 H(+) = ethene + 3 CO2 + H2O. The enzyme catalyses L-arginine + 2-oxoglutarate + O2 = guanidine + L-glutamate 5-semialdehyde + succinate + CO2. It participates in alkene biosynthesis; ethylene biosynthesis via 2-oxoglutarate. Its activity is regulated as follows. Activated by catalase. Inhibited by chelating reagents such as EDTA and Tiron (4,5-dihydroxy-1,3-benzene disulphonic acid), and by DTNB (5,5'-dithio-bis-2-nitrobenzoate) and hydrogen peroxide. Functionally, simultaneously catalyzes two reactions, namely formation of ethylene and of succinate from 2-oxoglutarate, with a molar ratio of 2:1. This is 2-oxoglutarate-dependent ethylene/succinate-forming enzyme (efe) from Pseudomonas savastanoi pv. phaseolicola (Pseudomonas syringae pv. phaseolicola).